Reading from the N-terminus, the 120-residue chain is CLAVATA3/ESR (CLE)-related protein 9 (120 aa).

Residues 1–26 form the signal peptide; it reads MTMTHLNRLILISLLFVSLLLKSSTA. An N-linked (GlcNAc...) asparagine glycan is attached at Asn-35. Positions 85 to 120 are disordered; it reads RSSRKQPLLSPPPPEIDPRYGVDKRLVPSGPNPLHN. Residues 100 to 110 are compositionally biased toward basic and acidic residues; that stretch reads IDPRYGVDKRL. Hydroxyproline is present on residues Pro-112 and Pro-115. Pro-115 carries an O-linked (Ara...) hydroxyproline glycan.

Belongs to the CLV3/ESR signal peptide family. The O-glycosylation (arabinosylation) of the hydroxyproline Pro-115 enhances binding affinity of the CLE9p peptide for its receptor. Mostly expressed in leaves, flowers, stems and apex, and, to a lower extent, in seedlings, roots, siliques and pollen.

The protein resides in the secreted. It is found in the extracellular space. Extracellular signal peptide that regulates cell fate. Represses root apical meristem maintenance. Regulates the transition of protophloem cells from proliferation to differentiation, thus impinging on postembryonic growth capacity of the root meristem; this signaling pathway requires CRN and CLV2. In Arabidopsis thaliana (Mouse-ear cress), this protein is CLAVATA3/ESR (CLE)-related protein 9.